The primary structure comprises 168 residues: 2-oxo-4-hydroxy-4-carboxy-5-ureidoimidazoline decarboxylase (168 aa).

H70 (proton donor; for OHCU decarboxylase activity) is an active-site residue. Over residues 70–79 (HPDLGERTEM) the composition is skewed to basic and acidic residues. Residues 70–93 (HPDLGERTEMTDASEAEQASAELD) are disordered. Substrate-binding positions include P71, 83–87 (SEAEQ), and 118–122 (FVMAV).

It belongs to the OHCU decarboxylase family.

It carries out the reaction 5-hydroxy-2-oxo-4-ureido-2,5-dihydro-1H-imidazole-5-carboxylate + H(+) = (S)-allantoin + CO2. The protein operates within purine metabolism; urate degradation; (S)-allantoin from urate: step 3/3. Catalyzes the stereoselective decarboxylation of 2-oxo-4-hydroxy-4-carboxy-5-ureidoimidazoline (OHCU) to (S)-allantoin. This is 2-oxo-4-hydroxy-4-carboxy-5-ureidoimidazoline decarboxylase from Haloferax volcanii (strain ATCC 29605 / DSM 3757 / JCM 8879 / NBRC 14742 / NCIMB 2012 / VKM B-1768 / DS2) (Halobacterium volcanii).